The primary structure comprises 90 residues: Small ribosomal subunit protein uS15 (90 aa).

This sequence belongs to the universal ribosomal protein uS15 family. Part of the 30S ribosomal subunit. Forms a bridge to the 50S subunit in the 70S ribosome, contacting the 23S rRNA.

One of the primary rRNA binding proteins, it binds directly to 16S rRNA where it helps nucleate assembly of the platform of the 30S subunit by binding and bridging several RNA helices of the 16S rRNA. Functionally, forms an intersubunit bridge (bridge B4) with the 23S rRNA of the 50S subunit in the ribosome. In Wolinella succinogenes (strain ATCC 29543 / DSM 1740 / CCUG 13145 / JCM 31913 / LMG 7466 / NCTC 11488 / FDC 602W) (Vibrio succinogenes), this protein is Small ribosomal subunit protein uS15.